A 156-amino-acid chain; its full sequence is Translationally controlled tumor protein 2 (156 aa).

A TCTP domain is found at 1–156 (MLVYQDILTG…LAYGLKEIKC (156 aa)).

The protein belongs to the TCTP family. In terms of tissue distribution, expressed in stems, cauline leaves, minor veins of rosette leaves, roots, lateral root primordia, vascular tissues of petioles and inflorescences, base of siliques, papillae and ovules. Not detected in root meristems, anthers or seeds. Expressed in stomata, trichomes and root cortex.

The protein resides in the nucleus. It localises to the cytoplasm. Its function is as follows. Regulates proliferation. Induces whole plant regeneration when expressed in heterologous systems. Involved in root growth and lateral root development, with a probable role in cell reprogramming. The long-distance transport of TCTP RNA and/or protein in plants may have an important role in regulation of growth and development. The polypeptide is Translationally controlled tumor protein 2 (Arabidopsis thaliana (Mouse-ear cress)).